The chain runs to 999 residues: Hypoxia up-regulated protein 1 (999 aa).

The N-terminal stretch at 1-32 (MAATVRRQRPRRLLCWTLVAVLLADLLALSDT) is a signal peptide. Asn-155, Asn-222, and Asn-515 each carry an N-linked (GlcNAc...) asparagine glycan. A disordered region spans residues 564–694 (VEDSPEEEST…KKQKPARKQK (131 aa)). Ser-567 is modified (phosphoserine). A compositionally biased stretch (polar residues) spans 574–583 (LTKLGNTISS). A glycan (N-linked (GlcNAc...) asparagine) is linked at Asn-596. Composition is skewed to basic and acidic residues over residues 611-626 (GSKD…KEET) and 641-670 (PKGD…EEKG). 3 N-linked (GlcNAc...) asparagine glycosylation sites follow: Asn-830, Asn-862, and Asn-869. Position 883 is an N6-acetyllysine (Lys-883). A disordered region spans residues 909-999 (AKFTKPRPRP…QKRSSKNDEL (91 aa)). 2 N-linked (GlcNAc...) asparagine glycosylation sites follow: Asn-922 and Asn-931. Basic and acidic residues predominate over residues 949–962 (EEAKPILEPDKEET). Residues 996 to 999 (NDEL) carry the Prevents secretion from ER motif.

Belongs to the heat shock protein 70 family. As to quaternary structure, part of a large chaperone multiprotein complex comprising DNAJB11, HSP90B1, HSPA5, HYOU, PDIA2, PDIA4, PDIA6, PPIB, SDF2L1, UGGT1 and very small amounts of ERP29, but not, or at very low levels, CALR nor CANX.

Its subcellular location is the endoplasmic reticulum lumen. Its function is as follows. Has a pivotal role in cytoprotective cellular mechanisms triggered by oxygen deprivation. Promotes HSPA5/BiP-mediated ATP nucleotide exchange and thereby activates the unfolded protein response (UPR) pathway in the presence of endoplasmic reticulum stress. May play a role as a molecular chaperone and participate in protein folding. This Cricetulus griseus (Chinese hamster) protein is Hypoxia up-regulated protein 1 (HYOU1).